The chain runs to 602 residues: Elongation factor 4 (602 aa).

Residues 7–189 (KRVRNFSIIA…AVVEKVPYPK (183 aa)) form the tr-type G domain. GTP-binding positions include 19–24 (DHGKST) and 136–139 (NKID).

This sequence belongs to the TRAFAC class translation factor GTPase superfamily. Classic translation factor GTPase family. LepA subfamily.

The protein localises to the cell membrane. It catalyses the reaction GTP + H2O = GDP + phosphate + H(+). In terms of biological role, required for accurate and efficient protein synthesis under certain stress conditions. May act as a fidelity factor of the translation reaction, by catalyzing a one-codon backward translocation of tRNAs on improperly translocated ribosomes. Back-translocation proceeds from a post-translocation (POST) complex to a pre-translocation (PRE) complex, thus giving elongation factor G a second chance to translocate the tRNAs correctly. Binds to ribosomes in a GTP-dependent manner. The protein is Elongation factor 4 of Clostridium tetani (strain Massachusetts / E88).